The chain runs to 269 residues: Thyroxine 5-deiodinase (269 aa).

Over 1–14 (MLPAPHTCCRLLQQ) the chain is Cytoplasmic. A helical; Signal-anchor for type II membrane protein transmembrane segment spans residues 15–35 (LLACCLLLPRFLLTVLLLWLL). The Extracellular segment spans residues 36 to 269 (DFPCVRRRVI…TGNGALVIQV (234 aa)). Selenocysteine 133 is a catalytic residue. A non-standard amino acid (selenocysteine) is located at residue selenocysteine 133.

This sequence belongs to the iodothyronine deiodinase family. Monomer. Homodimer. May undergo minor heretodimerization with DIO1 and DIO2.

It localises to the cell membrane. Its subcellular location is the endosome membrane. The enzyme catalyses 3,3',5'-triiodo-L-thyronine + iodide + A + H(+) = L-thyroxine + AH2. It catalyses the reaction 3,3'-diiodo-L-thyronine + iodide + A + H(+) = 3,3',5-triiodo-L-thyronine + AH2. It carries out the reaction 3-iodo-L-thyronine + iodide + A + H(+) = 3,5-diiodo-L-thyronine + AH2. The catalysed reaction is L-thyronine + iodide + A + H(+) = 3-iodo-L-thyronine + AH2. The enzyme catalyses 3',5'-diiodo-L-thyronine + iodide + A + H(+) = 3,3',5'-triiodo-L-thyronine + AH2. It catalyses the reaction 3'-iodo-L-thyronine + iodide + A + H(+) = 3,3'-diiodo-L-thyronine + AH2. It carries out the reaction 3,3',5'-triiodothyronamine + iodide + A + H(+) = 3,3',5,5'-tetraiodothyronamine + AH2. The catalysed reaction is 3',5'-diiodothyronamine + iodide + A + H(+) = 3,3',5'-triiodothyronamine + AH2. The enzyme catalyses 3,3'-diiodothyronamine + iodide + A + H(+) = 3,3',5-triiodothyronamine + AH2. It catalyses the reaction 3-iodothyronamine + iodide + A + H(+) = 3,5-diiodothyronamine + AH2. It carries out the reaction 3'-iodothyronamine + iodide + A + H(+) = 3,3'-diiodothyronamine + AH2. The catalysed reaction is thyronamine + iodide + A + H(+) = 3-iodothyronamine + AH2. In terms of biological role, plays a crucial role in the metabolism of thyroid hormones (TH) and has specific roles in TH activation and inactivation by deiodination. Catalyzes the deiodination of L-thyroxine (T4) to 3,3',5'-triiodothyronine (rT3), 3,5-diiodothyronine (3,5-T2) to 3-monoiodothyronine (3-T1), rT3 to 3',5'-diiodothyronine (3',5'-T2) and 3,3'-diiodothyronine (3,3'-T2) to 3'-monoiodothyronine (3'-T1) via inner-ring deiodination (IRD). Catalyzes the deiodination of 3,5,3'-triiodothyronine (T3) to 3,3'-diiodothyronine (3,3'-T2) via IRD. Catalyzes the deiodination of 3-T1 to L-thyronine (T0) via outer-ring deiodination (ORD). Catalyzes the tyrosyl ring deiodinations of 3,3',5,5'-tetraiodothyronamine, 3,3',5'-triiodothyronamine, 3,5,3'-triiodothyronamine, 3,5-diiodothyronamine, 3,3'-diiodothyronamine and 3-iodothyronamine. This chain is Thyroxine 5-deiodinase (dio3), found in Aquarana catesbeiana (American bullfrog).